We begin with the raw amino-acid sequence, 202 residues long: Coiled-coil domain-containing protein 85B (202 aa).

An N-acetylmethionine modification is found at M1. 2 coiled-coil regions span residues 44–82 (RLMQ…DLCC) and 118–141 (QKLA…KELC). Over residues 152–162 (GGPGGAVGSGA) the composition is skewed to gly residues. The disordered stretch occupies residues 152–202 (GGPGGAVGSGAGPTPELALPPCGPRDLGDGSSSTGSVGSPDQLPLACSPDD). Residues 180–190 (DGSSSTGSVGS) are compositionally biased toward low complexity.

This sequence belongs to the CCDC85 family. Interacts with CEBPB. May interact with CEBPD. Interacts with EURL. Interacts with MCRS1. Interacts with TCF7L2; competes with CTNNB1. Interacts with ANKRD26. Interacts with the beta-catenin family proteins ARVCF, CTNND1, CTNND2 and PKP4. Expressed in white and brown adipose tissue.

The protein localises to the nucleus. It localises to the cytoplasm. The protein resides in the cytoskeleton. It is found in the microtubule organizing center. Its subcellular location is the centrosome. The protein localises to the cell junction. It localises to the adherens junction. Functions as a transcriptional repressor. May inhibit the activity of CTNNB1 in a TP53-dependent manner and thus regulate cell growth. May function in adipocyte differentiation, negatively regulating mitotic clonal expansion. Plays a role in cell-cell adhesion and epithelium development through its interaction with proteins of the beta-catenin family. The chain is Coiled-coil domain-containing protein 85B (Ccdc85b) from Mus musculus (Mouse).